A 136-amino-acid chain; its full sequence is ATP synthase epsilon chain (136 aa).

The interval Asp95–Gln115 is disordered. Residues Ser101–Gln115 show a composition bias toward basic and acidic residues.

The protein belongs to the ATPase epsilon chain family. F-type ATPases have 2 components, CF(1) - the catalytic core - and CF(0) - the membrane proton channel. CF(1) has five subunits: alpha(3), beta(3), gamma(1), delta(1), epsilon(1). CF(0) has three main subunits: a, b and c.

It localises to the cellular thylakoid membrane. In terms of biological role, produces ATP from ADP in the presence of a proton gradient across the membrane. The polypeptide is ATP synthase epsilon chain (Rippkaea orientalis (strain PCC 8801 / RF-1) (Cyanothece sp. (strain PCC 8801))).